A 173-amino-acid polypeptide reads, in one-letter code: Putative metal-dependent hydrolase BCE33L2441 (173 aa).

Zn(2+)-binding residues include H65, H156, and H160.

The protein belongs to the metal hydrolase YfiT family. As to quaternary structure, homodimer. It depends on Zn(2+) as a cofactor.

Its subcellular location is the cytoplasm. Possible metal-dependent hydrolase. The chain is Putative metal-dependent hydrolase BCE33L2441 from Bacillus cereus (strain ZK / E33L).